The primary structure comprises 387 residues: Probable G-protein coupled receptor 173 (387 aa).

Over 1–40 (MANGNASSDGPGNPLAAVVSTTGGVMGGAPSSAVSTYVKL) the chain is Extracellular. N-linked (GlcNAc...) asparagine glycosylation is present at asparagine 5. Residues 41 to 61 (VLLGLIICISLVGNLVVSLLV) traverse the membrane as a helical segment. Residues 62–87 (LRDRALHKAPYYFLLDLCLADTIRSA) lie on the Cytoplasmic side of the membrane. A helical transmembrane segment spans residues 88–108 (VCFPFVLVSIKNGSAWTYSVL). At 109–111 (SCK) the chain is on the extracellular side. A disulfide bridge connects residues cysteine 110 and cysteine 188. The chain crosses the membrane as a helical span at residues 112-132 (VVAFMAVLFCFHAAFMLFCIS). The Cytoplasmic segment spans residues 133 to 153 (VTRYMAIAHHRFYSKRMTFWT). A helical membrane pass occupies residues 154-174 (CVAVVCMVWTLSVAMAFPPVF). The Extracellular portion of the chain corresponds to 175–202 (DVGTYKFIREEDQCIFEHRYFKANDTLG). Asparagine 198 carries an N-linked (GlcNAc...) asparagine glycan. A helical membrane pass occupies residues 203–223 (FMLMLAVLILATHVVYMKLLL). Residues 224–301 (FEYKHRKMKP…FKAEKQLGRM (78 aa)) are Cytoplasmic-facing. Residues 302-322 (FYVITLFFLVLWSPYIVACYW) form a helical membrane-spanning segment. The Extracellular segment spans residues 323–335 (RVFVKACTIPHRY). The helical transmembrane segment at 336–356 (LSTTVWMSFAQAGVNPIICFF) threads the bilayer. Residues 357 to 387 (LNKDLKKGLLAHLPPCCRTPPQLPREPYCVM) are Cytoplasmic-facing.

This sequence belongs to the G-protein coupled receptor 1 family.

It is found in the cell membrane. Is a receptor for the SMIM20 derived peptides Phoenixin-14 and Phoenixin-20. It mediates the Phoenixin-14 and Phoenixin-20 augmentation of gonadotropin-releasing hormone (GNRH) signaling in the hypothalamus and pituitary gland. In the ovary, it mediates the effects of Phoenixin-14 and Phoenixin-20 induced granulosa cell proliferation during follicular growth. The chain is Probable G-protein coupled receptor 173 (gpr173) from Danio rerio (Zebrafish).